The chain runs to 233 residues: Large ribosomal subunit protein uL1 (233 aa).

It belongs to the universal ribosomal protein uL1 family. As to quaternary structure, part of the 50S ribosomal subunit.

Binds directly to 23S rRNA. The L1 stalk is quite mobile in the ribosome, and is involved in E site tRNA release. Its function is as follows. Protein L1 is also a translational repressor protein, it controls the translation of the L11 operon by binding to its mRNA. This is Large ribosomal subunit protein uL1 from Paracoccus denitrificans (strain Pd 1222).